A 44-amino-acid polypeptide reads, in one-letter code: Defensin ARD1 (44 aa).

Intrachain disulfides connect Cys-7–Cys-32, Cys-18–Cys-40, and Cys-22–Cys-42.

The protein resides in the secreted. Functionally, possesses potent anti-fungal activity. The sequence is that of Defensin ARD1 from Archaeoprepona demophon (One-spotted leafwing butterfly).